The chain runs to 95 residues: N(2)-fixation sustaining protein CowN (95 aa).

The protein belongs to the CowN family.

Is required to sustain N(2)-dependent growth in the presence of low levels of carbon monoxide (CO). Probably acts by protecting the N(2) fixation ability of the nitrogenase complex, which is inactivated in the presence of CO. The protein is N(2)-fixation sustaining protein CowN of Allochromatium vinosum (strain ATCC 17899 / DSM 180 / NBRC 103801 / NCIMB 10441 / D) (Chromatium vinosum).